Reading from the N-terminus, the 287-residue chain is Oxaloacetate decarboxylase (287 aa).

Ser50 contributes to the substrate binding site. Asp88 provides a ligand contact to Mg(2+). The substrate site is built by Arg159 and His235.

The protein belongs to the isocitrate lyase family. Oxaloacetate decarboxylase subfamily. Homotetramer; dimer of dimers. It depends on Mg(2+) as a cofactor.

It carries out the reaction oxaloacetate + H(+) = pyruvate + CO2. In terms of biological role, catalyzes the decarboxylation of oxaloacetate into pyruvate. Seems to play a role in maintaining cellular concentrations of bicarbonate and pyruvate. In Pseudomonas aeruginosa (strain LESB58), this protein is Oxaloacetate decarboxylase.